The following is a 168-amino-acid chain: RxLR effector protein CRE8 (168 aa).

An N-terminal signal peptide occupies residues 1-23; the sequence is MRLPSILVVAASTLFLHYGYTSA. The RxLR-dEER signature appears at 54 to 69; the sequence is RFLRDGKIAEGDNEER.

Belongs to the RxLR effector family.

It localises to the secreted. Its subcellular location is the host cell. Effector that is involved in host plant infection. Contributes to virulence during the early infection stage, by inhibiting plant defense responses induced by both PAMP-triggered immunity (PTI) and effector-triggered immunity (ETI). The chain is RxLR effector protein CRE8 from Phytophthora infestans (strain T30-4) (Potato late blight agent).